A 362-amino-acid chain; its full sequence is Phosphoserine aminotransferase (362 aa).

Residue Arg43 coordinates L-glutamate. Pyridoxal 5'-phosphate is bound by residues 77-78 (AS), Trp103, Thr153, Asp173, and Gln196. N6-(pyridoxal phosphate)lysine is present on Lys197. 238-239 (NT) provides a ligand contact to pyridoxal 5'-phosphate.

This sequence belongs to the class-V pyridoxal-phosphate-dependent aminotransferase family. SerC subfamily. In terms of assembly, homodimer. Pyridoxal 5'-phosphate serves as cofactor.

It localises to the cytoplasm. The catalysed reaction is O-phospho-L-serine + 2-oxoglutarate = 3-phosphooxypyruvate + L-glutamate. It carries out the reaction 4-(phosphooxy)-L-threonine + 2-oxoglutarate = (R)-3-hydroxy-2-oxo-4-phosphooxybutanoate + L-glutamate. It participates in amino-acid biosynthesis; L-serine biosynthesis; L-serine from 3-phospho-D-glycerate: step 2/3. The protein operates within cofactor biosynthesis; pyridoxine 5'-phosphate biosynthesis; pyridoxine 5'-phosphate from D-erythrose 4-phosphate: step 3/5. Catalyzes the reversible conversion of 3-phosphohydroxypyruvate to phosphoserine and of 3-hydroxy-2-oxo-4-phosphonooxybutanoate to phosphohydroxythreonine. The sequence is that of Phosphoserine aminotransferase (serC) from Niallia circulans (Bacillus circulans).